The primary structure comprises 98 residues: Feather keratin 1 (98 aa).

Belongs to the avian keratin family. The avian keratins (F-ker, S-ker, C-ker and B-ker) are a complex mixture of very similar polypeptides.

This chain is Feather keratin 1, found in Gallus gallus (Chicken).